Here is a 105-residue protein sequence, read N- to C-terminus: UPF0145 protein LPC_0273 (105 aa).

Belongs to the UPF0145 family.

This Legionella pneumophila (strain Corby) protein is UPF0145 protein LPC_0273.